Reading from the N-terminus, the 501-residue chain is L-ornithine N(5)-monooxygenase (501 aa).

A disordered region spans residues 1-31 (MESVERKSESSYLGMRNMQPEQRLSLDPPRL). FAD-binding positions include 83–91 (ERQKQFAWH) and glutamine 102. A substrate-binding site is contributed by lysine 107. An FAD-binding site is contributed by valine 168. NADP(+) contacts are provided by residues 254-257 (SGQS) and arginine 279. Residues 293-296 (NEIF) and asparagine 323 each bind substrate. Position 323-325 (323-325 (NYS)) interacts with NADP(+). The interval 366–390 (EHHGPQSRMRIHLKSSKPESEGAAN) is disordered. Residues 381–390 (SKPESEGAAN) are compositionally biased toward basic and acidic residues. 466–468 (SLL) is a binding site for FAD. Residue serine 469 participates in substrate binding.

The protein belongs to the lysine N(6)-hydroxylase/L-ornithine N(5)-oxygenase family. As to quaternary structure, homotetramer. Requires FAD as cofactor.

The catalysed reaction is L-ornithine + NADPH + O2 = N(5)-hydroxy-L-ornithine + NADP(+) + H2O. It carries out the reaction L-ornithine + NADH + O2 = N(5)-hydroxy-L-ornithine + NAD(+) + H2O. Its pathway is siderophore biosynthesis; ferrichrome biosynthesis. Its function is as follows. L-ornithine N(5)-monooxygenase; part of the siderophore biosynthetic pathway. Aspergillus fumigatus produces four types of siderophores, low-molecular-mass iron chelators, including excreted fusarinine C (FsC) and triacetylfusarinine C (TAFC) for iron uptake; and intacellular ferricrocin (FC) for hyphal and hydroxyferricrocin (HFC) for conidial iron distribution and storage. TAFC consists of three N(2)-acetyl-N(5)-anhydromevalonyl-N(5)-hydroxyornithine residues cyclically linked by ester bonds; FC is a cyclic hexapeptide with the structure Gly-Ser-Gly-(N(5)-acetyl-N(5)-hydroxyornithine)x3. The biosynthesis of all four siderophores depends on the hydroxylation of ornithine, catalyzed by the monooxygenase sidA. SidA is highly specific for its substrate, only hydrolyzing l-ornithine, and has preference for NADPH over NADH, NADPH playing a role in stabilization of the C4a-hydroperoxyflavin intermediate. Subsequently, the pathways for biosynthesis of extra- and intracellular siderophores split. For biosynthesis of extracellular siderophores, the transacylase sidF transfers anhydromevalonyl to N(5)-hydroxyornithine. The required anhydromevalonyl-CoA moiety is derived from mevalonate by CoA ligation and dehydration catalyzed by sidI and sidH respectively. The acetylation of N(5)-hydroxyornithine for FC biosynthesis involves the constitutively expressed sidL. FC is hydroxylated to HFC by an as yet uncharacterized enzyme during conidiation. Assembly of fusarinine C (FsC) and FC is catalyzed by two different nonribosomal peptide synthetases (NRPS), sidD and sidC respectively. Subsequently, sidG catalyzes N2-acetylation of FsC for forming TAFC. Both extra- and intracellular siderophores are crucial for growth during iron limitation and virulence. The polypeptide is L-ornithine N(5)-monooxygenase (Aspergillus fumigatus (strain ATCC MYA-4609 / CBS 101355 / FGSC A1100 / Af293) (Neosartorya fumigata)).